The chain runs to 322 residues: Elongation factor P--(R)-beta-lysine ligase (322 aa).

72–74 (SPE) lines the substrate pocket. Residues 96 to 98 (RNN) and N106 each bind ATP. Y115 serves as a coordination point for substrate. 241–242 (EL) contributes to the ATP binding site. E248 is a binding site for substrate. G297 serves as a coordination point for ATP.

Belongs to the class-II aminoacyl-tRNA synthetase family. EpmA subfamily. In terms of assembly, homodimer.

The catalysed reaction is D-beta-lysine + L-lysyl-[protein] + ATP = N(6)-((3R)-3,6-diaminohexanoyl)-L-lysyl-[protein] + AMP + diphosphate + H(+). In terms of biological role, with EpmB is involved in the beta-lysylation step of the post-translational modification of translation elongation factor P (EF-P). Catalyzes the ATP-dependent activation of (R)-beta-lysine produced by EpmB, forming a lysyl-adenylate, from which the beta-lysyl moiety is then transferred to the epsilon-amino group of a conserved specific lysine residue in EF-P. This Buchnera aphidicola subsp. Baizongia pistaciae (strain Bp) protein is Elongation factor P--(R)-beta-lysine ligase.